The following is a 441-amino-acid chain: MSISYTGQLPTTSPLSLTQLITSDRYQQVIENADAARARVREQLKHAKKTGATEANGDIMPVIKALEEYMPHITSIVDNEGVFRFTSQIITCWRLPFQSQSSMANKTPLHGLSFEYIMVLFTYALALATLANQYVARDKEDRWKHASAYISKARGVVDYLRQCRSFQIICNEPPASVPRDLSSATMSALSHMLCGASHMLILYKCDAETYLDGGAPSAGANSGGFSSSLLLRTAIFARDQFETASALLGEPVSKRKLVTSLVKEKSSKFSLSKKLHLRKDDGSPSLAPVSSFESNRDLSSTSSGTLDSLLSWLSRARGVAEGFVFKHMAIQAYENNQIGKAVGAAYAAILQLEDVKIPQKSALYIPVTHLKETLNRHHADYKADNDRLSFEPVPSPSELAQEWPSGRQVISAQKWTPQTSLDLGEDTSSSAPKYSGQGSYY.

A BRO1 domain is found at 3 to 352 (ISYTGQLPTT…GAAYAAILQL (350 aa)). 2 disordered regions span residues 278–304 (RKDD…TSSG) and 414–441 (KWTP…GSYY).

The protein belongs to the palC family.

Required for the proteolytic cleavage of the transcription factor RIM101 in response to alkaline ambient pH. The sequence is that of pH-response regulator protein palC from Yarrowia lipolytica (strain CLIB 122 / E 150) (Yeast).